A 462-amino-acid polypeptide reads, in one-letter code: NAD-capped RNA hydrolase NUDT12 (462 aa).

K10 is subject to N6-succinyllysine. ANK repeat units follow at residues 11–40 (EMIS…SLLN), 45–74 (NGWT…DRSL), and 78–98 (ARQT…ANLL). Residue K185 is modified to N6-succinyllysine. Residues C284 and C287 each contribute to the Zn(2+) site. K292 bears the N6-succinyllysine mark. Zn(2+) is bound by residues C302 and C307. Substrate is bound by residues Y318, 354 to 356 (AGF), E370, E374, and E415. Residues 319-453 (PRVDPVVIMQ…SRAIAHQLIK (135 aa)) form the Nudix hydrolase domain. A354, E370, E374, and E415 together coordinate Mg(2+). The short motif at 355 to 376 (GFIEPGETIEDAVRREVEEESG) is the Nudix box element. Positions 460–462 (PNL) match the Microbody targeting signal motif.

It belongs to the Nudix hydrolase family. NudC subfamily. Homodimer. Homodimerization is essential for its catalytic activity and protein stability. Interacts (via ANK repeats) with BLMH. Mg(2+) is required as a cofactor. It depends on Zn(2+) as a cofactor. Expressed abundantly in the liver and kidney.

The protein localises to the cytoplasm. The protein resides in the peroxisome. It localises to the cytoplasmic granule. It carries out the reaction a 5'-end NAD(+)-phospho-ribonucleoside in mRNA + H2O = a 5'-end phospho-adenosine-phospho-ribonucleoside in mRNA + beta-nicotinamide D-ribonucleotide + 2 H(+). The catalysed reaction is NAD(+) + H2O = beta-nicotinamide D-ribonucleotide + AMP + 2 H(+). The enzyme catalyses NADH + H2O = reduced beta-nicotinamide D-ribonucleotide + AMP + 2 H(+). It catalyses the reaction NADPH + H2O = reduced beta-nicotinamide D-ribonucleotide + adenosine 2',5'-bisphosphate + 2 H(+). Its function is as follows. mRNA decapping enzyme that specifically removes the nicotinamide adenine dinucleotide (NAD) cap from a subset of mRNAs by hydrolyzing the diphosphate linkage to produce nicotinamide mononucleotide (NMN) and 5' monophosphate mRNA. The NAD-cap is present at the 5'-end of some RNAs; in contrast to the canonical N7 methylguanosine (m7G) cap, the NAD cap promotes mRNA decay. Preferentially acts on NAD-capped transcripts in response to nutrient stress. Also acts on free nicotinamide adenine dinucleotide molecules: hydrolyzes NAD(H) into NMN(H) and AMP, and NADPH into NMNH and 2',5'-ADP. May act to regulate the concentration of peroxisomal nicotinamide nucleotide cofactors required for oxidative metabolism in this organelle. Regulates the levels of circadian clock components PER1, PER2, PER3 and CRY2 in the liver. The sequence is that of NAD-capped RNA hydrolase NUDT12 from Mus musculus (Mouse).